The sequence spans 126 residues: Histone H2B 7 (126 aa).

Residues 1 to 12 (MPEPAKSAPAPK) are compositionally biased toward low complexity. The tract at residues 1–35 (MPEPAKSAPAPKKGSKKAVTKTQKKGDKKRKRARK) is disordered. 2 positions are modified to N6-acetyllysine: Lys-6 and Lys-13. Residues 13–34 (KGSKKAVTKTQKKGDKKRKRAR) show a composition bias toward basic residues. Phosphoserine is present on Ser-15. Residues Lys-16 and Lys-21 each carry the N6-acetyllysine modification. Ser-113 carries an O-linked (GlcNAc) serine glycan. Lys-121 participates in a covalent cross-link: Glycyl lysine isopeptide (Lys-Gly) (interchain with G-Cter in ubiquitin).

This sequence belongs to the histone H2B family. The nucleosome is a histone octamer containing two molecules each of H2A, H2B, H3 and H4 assembled in one H3-H4 heterotetramer and two H2A-H2B heterodimers. The octamer wraps approximately 147 bp of DNA. Post-translationally, monoubiquitination of Lys-121 by the BRE1 gives a specific tag for epigenetic transcriptional activation and is also prerequisite for histone H3 'Lys-4' and 'Lys-79' methylation. Phosphorylated on Ser-15 during apoptosis; which facilitates apoptotic chromatin condensation. In terms of processing, glcNAcylation at Ser-113 promotes monoubiquitination of Lys-121. It fluctuates in response to extracellular glucose, and associates with transcribed genes.

The protein localises to the nucleus. It localises to the chromosome. Its function is as follows. Core component of nucleosome. Nucleosomes wrap and compact DNA into chromatin, limiting DNA accessibility to the cellular machineries which require DNA as a template. Histones thereby play a central role in transcription regulation, DNA repair, DNA replication and chromosomal stability. DNA accessibility is regulated via a complex set of post-translational modifications of histones, also called histone code, and nucleosome remodeling. The protein is Histone H2B 7 (H2B-VII) of Gallus gallus (Chicken).